Here is a 229-residue protein sequence, read N- to C-terminus: MDSLRDPEHALVVLSGGQDSTTCLYWALSRFAQVSAISFDYGQRHRVELDAARTIAAMAGVGHTIIPINTFSALGGNALTDQQMSPDTGPDAETLLPNTFVPGRNLVFLTFAAAWAWPRGIRHIVTGVAQTDYSGYPDCRENTLRALELAINLGMESRMRLHMPLMFLSKADTVTLARTVGAMPALAFSHTCYAGAVPPCGQCAACVLRAKGFAEAGIPDPLLNRLAGV.

14 to 24 (LSGGQDSTTCL) contacts ATP. 4 residues coordinate Zn(2+): C192, C200, C203, and C206.

The protein belongs to the QueC family. The cofactor is Zn(2+).

The enzyme catalyses 7-carboxy-7-deazaguanine + NH4(+) + ATP = 7-cyano-7-deazaguanine + ADP + phosphate + H2O + H(+). Its pathway is purine metabolism; 7-cyano-7-deazaguanine biosynthesis. Its function is as follows. Catalyzes the ATP-dependent conversion of 7-carboxy-7-deazaguanine (CDG) to 7-cyano-7-deazaguanine (preQ(0)). This is 7-cyano-7-deazaguanine synthase from Laribacter hongkongensis (strain HLHK9).